The primary structure comprises 422 residues: Zinc-regulated transporter 2 (422 aa).

Residues 1 to 27 (MVDLIARDDSVDTCQASNGYNGHAGLR) lie on the Extracellular side of the membrane. A helical transmembrane segment spans residues 28 to 48 (ILAVFIILISSGLGVYFPILS). The Cytoplasmic portion of the chain corresponds to 49–60 (SRYSFIRLPNWC). Residues 61-81 (FFIAKFFGSGVIVATAFVHLL) form a helical membrane-spanning segment. The Extracellular segment spans residues 82–99 (QPAAEALGDECLGGTFAE). A helical transmembrane segment spans residues 100-120 (YPWAFGICLMSLFLLFFTEII). Topologically, residues 121-262 (THYFVAKTLG…EEDKEQYLNQ (142 aa)) are cytoplasmic. Serine 148, serine 149, serine 162, and serine 170 each carry phosphoserine. The residue at position 188 (threonine 188) is a Phosphothreonine. Residues 263–283 (ILAVFILEFGIIFHSVFVGLS) form a helical membrane-spanning segment. The Extracellular portion of the chain corresponds to 284-290 (LSVAGEE). A helical membrane pass occupies residues 291–311 (FETLFIVLTFHQMFEGLGLGT). Over 312–326 (RVAETNWPESKKYMP) the chain is Cytoplasmic. Residues 327 to 347 (WLMGLAFTLTSPIAVAVGIGV) traverse the membrane as a helical segment. Residues 348 to 358 (RHSWIPGSRRA) lie on the Extracellular side of the membrane. The chain crosses the membrane as a helical span at residues 359–379 (LIANGVFDSISSGILIYTGLV). The Cytoplasmic portion of the chain corresponds to 380–400 (ELMAHEFLYSNQFKGPDGLKK). A helical transmembrane segment spans residues 401-421 (MLSAYLIMCCGAALMALLGKW). Residue alanine 422 is a topological domain, extracellular.

The protein belongs to the ZIP transporter (TC 2.A.5) family.

The protein localises to the membrane. Its function is as follows. Low-affinity zinc transport protein. Active in zinc-replete cells and is time-, temperature- and concentration-dependent and prefers zinc over other metals as its substrate. The polypeptide is Zinc-regulated transporter 2 (ZRT2) (Saccharomyces cerevisiae (strain ATCC 204508 / S288c) (Baker's yeast)).